An 858-amino-acid polypeptide reads, in one-letter code: Leucine--tRNA ligase (858 aa).

The short motif at 42 to 52 is the 'HIGH' region element; the sequence is PYPSGRLHMGH. Positions 618–622 match the 'KMSKS' region motif; the sequence is KMSKS. K621 provides a ligand contact to ATP.

The protein belongs to the class-I aminoacyl-tRNA synthetase family.

The protein resides in the cytoplasm. It carries out the reaction tRNA(Leu) + L-leucine + ATP = L-leucyl-tRNA(Leu) + AMP + diphosphate. The protein is Leucine--tRNA ligase of Aliivibrio fischeri (strain MJ11) (Vibrio fischeri).